A 133-amino-acid polypeptide reads, in one-letter code: ATP synthase epsilon chain (133 aa).

Residues 81 to 110 form a disordered region; it reads AAERPEQIDTERARKAKERAEQRLASEHVD.

Belongs to the ATPase epsilon chain family. F-type ATPases have 2 components, CF(1) - the catalytic core - and CF(0) - the membrane proton channel. CF(1) has five subunits: alpha(3), beta(3), gamma(1), delta(1), epsilon(1). CF(0) has three main subunits: a, b and c.

The protein localises to the cell membrane. In terms of biological role, produces ATP from ADP in the presence of a proton gradient across the membrane. The polypeptide is ATP synthase epsilon chain (Shouchella clausii (strain KSM-K16) (Alkalihalobacillus clausii)).